The primary structure comprises 391 residues: Chaperone protein DnaJ (391 aa).

Residues 4–68 (DFYDVLGVSR…ETRQQYDQLG (65 aa)) form the J domain. Residues 53–79 (DVLTDEETRQQYDQLGHERFEEAEKRG) are compositionally biased toward basic and acidic residues. Disordered stretches follow at residues 53-94 (DVLT…MGGA) and 117-136 (FFGG…EQGR). 2 stretches are compositionally biased toward gly residues: residues 81–94 (TGNG…MGGA) and 119–129 (GGAGGGGGRGR). The CR-type zinc-finger motif lies at 152–234 (GVSKQVTVRR…CGGQGQTRER (83 aa)). Zn(2+) contacts are provided by Cys-165, Cys-168, Cys-182, Cys-185, Cys-208, Cys-211, Cys-222, and Cys-225. CXXCXGXG motif repeat units follow at residues 165-172 (CADCGGSG), 182-189 (CPQCDGQG), 208-215 (CSRCGGEG), and 222-229 (CSTCGGQG).

This sequence belongs to the DnaJ family. In terms of assembly, homodimer. The cofactor is Zn(2+).

It localises to the cytoplasm. In terms of biological role, participates actively in the response to hyperosmotic and heat shock by preventing the aggregation of stress-denatured proteins and by disaggregating proteins, also in an autonomous, DnaK-independent fashion. Unfolded proteins bind initially to DnaJ; upon interaction with the DnaJ-bound protein, DnaK hydrolyzes its bound ATP, resulting in the formation of a stable complex. GrpE releases ADP from DnaK; ATP binding to DnaK triggers the release of the substrate protein, thus completing the reaction cycle. Several rounds of ATP-dependent interactions between DnaJ, DnaK and GrpE are required for fully efficient folding. Also involved, together with DnaK and GrpE, in the DNA replication of plasmids through activation of initiation proteins. The sequence is that of Chaperone protein DnaJ from Halobacterium salinarum (strain ATCC 29341 / DSM 671 / R1).